Consider the following 337-residue polypeptide: MIQKNWQELIKPNKVEFCTHDNPNISSVIVEPLERGFGLTLGNALRRVLLSSLRGAAITAVQIDGVLHEFSSIPGVREDVTDIILNIKEIALRMQEEGPKRVVVCKEGPGVVRAGDINTVGDMEILNPEHVICTLDEGAEIRMEFIVNTGKGYIPSDRNCVDDGRIGLIPVDSLYSPIRKVSYKVENTREGQVLDYDKLTLTIETNGAVNGEDAVAFAARILQDQLSLFVNFEEPQKEIVDESDSELTFNPALLKKVDELELSVRSANCLKNDNIVYIGDLIQKTESEMLRTPNFGRKSLNEIKEVLACMGLHLGMEIPTWPPENIDDLAKRYEDQY.

An alpha N-terminal domain (alpha-NTD) region spans residues Met1–Glu233. The tract at residues Phe249–Tyr337 is alpha C-terminal domain (alpha-CTD).

The protein belongs to the RNA polymerase alpha chain family. As to quaternary structure, homodimer. The RNAP catalytic core consists of 2 alpha, 1 beta, 1 beta' and 1 omega subunit. When a sigma factor is associated with the core the holoenzyme is formed, which can initiate transcription.

It catalyses the reaction RNA(n) + a ribonucleoside 5'-triphosphate = RNA(n+1) + diphosphate. Its function is as follows. DNA-dependent RNA polymerase catalyzes the transcription of DNA into RNA using the four ribonucleoside triphosphates as substrates. The polypeptide is DNA-directed RNA polymerase subunit alpha (Bartonella quintana (strain Toulouse) (Rochalimaea quintana)).